A 114-amino-acid polypeptide reads, in one-letter code: MELMNKKVMMKLALMVFLLSFAANVVNARFDSTSFITQVLSNGDDVKSACCDTCLCTKSDPPTCRCVDVGETCHSACDSCICALSYPPQCQCFDTHKFCYKACHNSEVEEVIKN.

The first 28 residues, 1-28 (MELMNKKVMMKLALMVFLLSFAANVVNA), serve as a signal peptide directing secretion. The propeptide occupies 29–42 (RFDSTSFITQVLSN). Intrachain disulfides connect Cys50/Cys103, Cys51/Cys66, Cys54/Cys99, Cys56/Cys64, Cys73/Cys80, Cys77/Cys92, and Cys82/Cys90.

Belongs to the Bowman-Birk serine protease inhibitor family. As to expression, seed.

Functionally, inhibitor of trypsin and of chymotrypsin. May function as a natural phytochemical defense against predators. This is Seed trypsin/chymotrypsin inhibitor TI5-72 (TI572) from Pisum sativum (Garden pea).